Consider the following 968-residue polypeptide: RNA polymerase-associated protein RapA (968 aa).

In terms of domain architecture, Helicase ATP-binding spans 164–334 (DVGRRHAPRV…FARLRLLDPN (171 aa)). ATP is bound at residue 177–184 (DEVGLGKT). The DEAH box signature appears at 280-283 (DEAH). The 155-residue stretch at 490-644 (RVEWLMGYLT…TCPTGRTVYD (155 aa)) folds into the Helicase C-terminal domain.

The protein belongs to the SNF2/RAD54 helicase family. RapA subfamily. Interacts with the RNAP. Has a higher affinity for the core RNAP than for the holoenzyme. Its ATPase activity is stimulated by binding to RNAP.

Its function is as follows. Transcription regulator that activates transcription by stimulating RNA polymerase (RNAP) recycling in case of stress conditions such as supercoiled DNA or high salt concentrations. Probably acts by releasing the RNAP, when it is trapped or immobilized on tightly supercoiled DNA. Does not activate transcription on linear DNA. Probably not involved in DNA repair. The polypeptide is RNA polymerase-associated protein RapA (Klebsiella pneumoniae (strain 342)).